The primary structure comprises 207 residues: Large ribosomal subunit protein uL4 (207 aa).

Residues 58 to 85 form a disordered region; sequence AGSGKKPFKQKGTGQARQGCRRAPQYPG.

This sequence belongs to the universal ribosomal protein uL4 family. In terms of assembly, part of the 50S ribosomal subunit.

Functionally, one of the primary rRNA binding proteins, this protein initially binds near the 5'-end of the 23S rRNA. It is important during the early stages of 50S assembly. It makes multiple contacts with different domains of the 23S rRNA in the assembled 50S subunit and ribosome. Its function is as follows. Forms part of the polypeptide exit tunnel. The protein is Large ribosomal subunit protein uL4 of Geotalea uraniireducens (strain Rf4) (Geobacter uraniireducens).